Here is a 132-residue protein sequence, read N- to C-terminus: Protein NrdI (132 aa).

Belongs to the NrdI family.

Its function is as follows. Probably involved in ribonucleotide reductase function. The chain is Protein NrdI from Bartonella quintana (strain Toulouse) (Rochalimaea quintana).